We begin with the raw amino-acid sequence, 597 residues long: Elongation factor 4 (597 aa).

Residues D2 to K184 enclose the tr-type G domain. GTP-binding positions include D14–T19 and N131–D134.

Belongs to the TRAFAC class translation factor GTPase superfamily. Classic translation factor GTPase family. LepA subfamily.

The protein resides in the cell inner membrane. It catalyses the reaction GTP + H2O = GDP + phosphate + H(+). Its function is as follows. Required for accurate and efficient protein synthesis under certain stress conditions. May act as a fidelity factor of the translation reaction, by catalyzing a one-codon backward translocation of tRNAs on improperly translocated ribosomes. Back-translocation proceeds from a post-translocation (POST) complex to a pre-translocation (PRE) complex, thus giving elongation factor G a second chance to translocate the tRNAs correctly. Binds to ribosomes in a GTP-dependent manner. In Burkholderia vietnamiensis (strain G4 / LMG 22486) (Burkholderia cepacia (strain R1808)), this protein is Elongation factor 4.